The chain runs to 108 residues: uncharacterized protein (108 aa).

A run of 2 helical transmembrane segments spans residues 32–52 (YFFF…LLAI) and 68–88 (SYLL…LVVG).

Its subcellular location is the membrane. This is an uncharacterized protein from Saccharomyces cerevisiae (strain ATCC 204508 / S288c) (Baker's yeast).